The following is a 135-amino-acid chain: ATP synthase epsilon chain (135 aa).

Belongs to the ATPase epsilon chain family. In terms of assembly, F-type ATPases have 2 components, CF(1) - the catalytic core - and CF(0) - the membrane proton channel. CF(1) has five subunits: alpha(3), beta(3), gamma(1), delta(1), epsilon(1). CF(0) has three main subunits: a, b and c.

Its subcellular location is the cell inner membrane. In terms of biological role, produces ATP from ADP in the presence of a proton gradient across the membrane. The chain is ATP synthase epsilon chain from Brucella anthropi (strain ATCC 49188 / DSM 6882 / CCUG 24695 / JCM 21032 / LMG 3331 / NBRC 15819 / NCTC 12168 / Alc 37) (Ochrobactrum anthropi).